An 882-amino-acid polypeptide reads, in one-letter code: Alanine--tRNA ligase (882 aa).

Zn(2+) is bound by residues His570, His574, Cys672, and His676.

This sequence belongs to the class-II aminoacyl-tRNA synthetase family. It depends on Zn(2+) as a cofactor.

The protein localises to the cytoplasm. It catalyses the reaction tRNA(Ala) + L-alanine + ATP = L-alanyl-tRNA(Ala) + AMP + diphosphate. In terms of biological role, catalyzes the attachment of alanine to tRNA(Ala) in a two-step reaction: alanine is first activated by ATP to form Ala-AMP and then transferred to the acceptor end of tRNA(Ala). Also edits incorrectly charged Ser-tRNA(Ala) and Gly-tRNA(Ala) via its editing domain. This chain is Alanine--tRNA ligase, found in Xanthomonas euvesicatoria pv. vesicatoria (strain 85-10) (Xanthomonas campestris pv. vesicatoria).